The sequence spans 162 residues: Flagellar assembly factor FliW (162 aa).

Belongs to the FliW family. As to quaternary structure, interacts with translational regulator CsrA and flagellin(s).

Its subcellular location is the cytoplasm. Acts as an anti-CsrA protein, binds CsrA and prevents it from repressing translation of its target genes, one of which is flagellin. Binds to flagellin and participates in the assembly of the flagellum. The chain is Flagellar assembly factor FliW from Alkaliphilus metalliredigens (strain QYMF).